The following is a 112-amino-acid chain: Nucleoid-associated protein CA_C0126 (112 aa).

Residues Glu-93 to Lys-102 show a composition bias toward basic and acidic residues. Residues Glu-93–Leu-112 are disordered.

It belongs to the YbaB/EbfC family. In terms of assembly, homodimer.

The protein localises to the cytoplasm. It is found in the nucleoid. Its function is as follows. Binds to DNA and alters its conformation. May be involved in regulation of gene expression, nucleoid organization and DNA protection. This chain is Nucleoid-associated protein CA_C0126, found in Clostridium acetobutylicum (strain ATCC 824 / DSM 792 / JCM 1419 / IAM 19013 / LMG 5710 / NBRC 13948 / NRRL B-527 / VKM B-1787 / 2291 / W).